A 122-amino-acid polypeptide reads, in one-letter code: UPF0102 protein NGR_c36770 (122 aa).

The protein belongs to the UPF0102 family.

The protein is UPF0102 protein NGR_c36770 of Sinorhizobium fredii (strain NBRC 101917 / NGR234).